The following is a 328-amino-acid chain: MPITRMRMRPWLEMQINSNQIPGLSWINKEEMIFQIPWKHAALHGWDINKDACLFRSWAIHTGRYKAGEKEPDPKTWKANFRCAMNSLPDIEEVKDQSRNKGSSAVRVYRMLPPLTKNQRKERKSKSSRDTKSKTKRKLCGDSSPDTLSDGLSSSTLPDDHSSYTAQGYLGQDLDMDRDITPALSPCVVSSSLSEWHMQMDIMPDSTTDLYNLQVSPMPSTSEAATDEDEEGKLPEDIMKLFEQSEWQPTHVDGKGYLLNEPGAQLSTVYGDFSCKEEPEIDSPGGDIEIGIQRVFTEMKNMDPVMWMDTLLGNSTRPPSIQAIPCAP.

The IRF tryptophan pentad repeat DNA-binding region spans 5–113 (RMRMRPWLEM…SAVRVYRMLP (109 aa)). The residue at position 78 (Lys-78) is an N6-acetyllysine. A disordered region spans residues 92 to 164 (EEVKDQSRNK…STLPDDHSSY (73 aa)). The segment covering 141 to 157 (GDSSPDTLSDGLSSSTL) has biased composition (low complexity). Residues Lys-276 and Lys-300 each participate in a glycyl lysine isopeptide (Lys-Gly) (interchain with G-Cter in SUMO) cross-link.

The protein belongs to the IRF family. In terms of assembly, monomer. Homodimer. Interacts with EP300. Interacts with MYD88. Interacts with PIAS3. Interacts with SPOP. Phosphorylated by CK2 and this positively regulates its activity. Post-translationally, sumoylation represses the transcriptional activity and displays enhanced resistance to protein degradation. Sumoylated by UBE2I/UBC9 and SUMO1. Inactivates the tumor suppressor activity. Elevated levels in tumor cells. Major site is Lys-276. Sumoylation is enhanced by PIAS3. Desumoylated by SENP1 in tumor cells and appears to compete with ubiquitination on C-terminal sites. In terms of processing, ubiquitinated in a SPOP-depedent manner. Appears to compete with sumoylation on C-terminal sites.

It localises to the nucleus. It is found in the cytoplasm. Its activity is regulated as follows. Activated by MYD88. Its function is as follows. Transcriptional regulator which displays a remarkable functional diversity in the regulation of cellular responses. Regulates transcription of IFN and IFN-inducible genes, host response to viral and bacterial infections, regulation of many genes expressed during hematopoiesis, inflammation, immune responses and cell proliferation and differentiation, regulation of the cell cycle and induction of growth arrest and programmed cell death following DNA damage. Stimulates both innate and acquired immune responses through the activation of specific target genes and can act as a transcriptional activator and repressor regulating target genes by binding to an interferon-stimulated response element (ISRE) in their promoters. Has an essentail role in IFNG-dependent immunity to mycobacteria. Binds to a consensus sequence in gene promoters. Its target genes for transcriptional activation activity include: genes involved in anti-viral response, such as IFN-alpha/beta, RIGI, TNFSF10/TRAIL, ZBP1, OAS1/2, PIAS1/GBP, EIF2AK2/PKR and RSAD2/viperin; antibacterial response, such as GBP2, GBP5 and NOS2/INOS; anti-proliferative response, such as p53/TP53, LOX and CDKN1A; apoptosis, such as BBC3/PUMA, CASP1, CASP7 and CASP8; immune response, such as IL7, IL12A/B and IL15, PTGS2/COX2 and CYBB; DNA damage responses and DNA repair, such as POLQ/POLH; MHC class I expression, such as TAP1, PSMB9/LMP2, PSME1/PA28A, PSME2/PA28B and B2M and MHC class II expression, such as CIITA; metabolic enzymes, such as ACOD1/IRG1. Represses genes involved in anti-proliferative response, such as BIRC5/survivin, CCNB1, CCNE1, CDK1, CDK2 and CDK4 and in immune response, such as FOXP3, IL4, ANXA2 and TLR4. Stimulates p53/TP53-dependent transcription through enhanced recruitment of EP300 leading to increased acetylation of p53/TP53. Plays an important role in immune response directly affecting NK maturation and activity, macrophage production of IL12, Th1 development and maturation of CD8+ T-cells. Also implicated in the differentiation and maturation of dendritic cells and in the suppression of regulatory T (Treg) cells development. Acts as a tumor suppressor and plays a role not only in antagonism of tumor cell growth but also in stimulating an immune response against tumor cells. The chain is Interferon regulatory factor 1 (Irf1) from Rattus norvegicus (Rat).